A 2344-amino-acid polypeptide reads, in one-letter code: Peroxide stress-activated histidine kinase mak3 (2344 aa).

One can recognise a Protein kinase domain in the interval 1-295 (MYSQHELRNK…GIVNDLEACL (295 aa)). Residues Ser12, Ser16, and Ser17 each carry the phosphoserine modification. A compositionally biased stretch (polar residues) spans 486–503 (SGNTRKTSLLGSNHSSYS). The interval 486–506 (SGNTRKTSLLGSNHSSYSDKL) is disordered. 2 TPR repeats span residues 829–862 (CHYL…IPHE) and 1340–1373 (AFAF…YAAL). The PAC domain occupies 1730–1781 (FELEIRIKRKDGVYRWNLTRCTPTTNEKNRTSFLCATIDIDDQKKARATALE). The 227-residue stretch at 1792-2018 (NISHELRTPF…TFKICYDLKI (227 aa)) folds into the Histidine kinase domain. His1795 carries the phosphohistidine; by autocatalysis modification. The 123-residue stretch at 2211–2333 (KILIAEDNPI…TLIKMLLQYL (123 aa)) folds into the Response regulatory domain. Asp2263 carries the post-translational modification 4-aspartylphosphate.

The protein localises to the cytoplasm. It carries out the reaction ATP + protein L-histidine = ADP + protein N-phospho-L-histidine.. Functionally, involved in the control of the SAPK-dependent transcriptional response to peroxide stress. Regulates sty1 activity. This is Peroxide stress-activated histidine kinase mak3 (mak3) from Schizosaccharomyces pombe (strain 972 / ATCC 24843) (Fission yeast).